A 235-amino-acid chain; its full sequence is Vacuolar protein sorting-associated protein 60.1 (235 aa).

Residues 1–29 (MRRVFGAKKNTEPPPSIQDASDRINKRGD) are disordered. A compositionally biased stretch (basic and acidic residues) spans 20–29 (ASDRINKRGD). Residues 99–148 (LKDAQQTMTALKSANKELKGMMKTVKIQDIDNLQDEMMDLMDVSSEIQES) adopt a coiled-coil conformation. The disordered stretch occupies residues 175 to 235 (MGNETEADGM…PAVPRASLRG (61 aa)).

The protein belongs to the SNF7 family. In terms of assembly, interacts with SKD1/VPS4 and LIP5. Interacts with VPS2.2.

It localises to the endosome. It is found in the multivesicular body membrane. In terms of biological role, probable peripherally associated component of the endosomal sorting required for transport complex III (ESCRT-III) which is involved in multivesicular bodies (MVBs) formation and sorting of endosomal cargo proteins into MVBs. The chain is Vacuolar protein sorting-associated protein 60.1 from Arabidopsis thaliana (Mouse-ear cress).